Consider the following 264-residue polypeptide: Tryptophan synthase alpha chain (264 aa).

Catalysis depends on proton acceptor residues Glu-49 and Asp-60.

It belongs to the TrpA family. In terms of assembly, tetramer of two alpha and two beta chains.

The enzyme catalyses (1S,2R)-1-C-(indol-3-yl)glycerol 3-phosphate + L-serine = D-glyceraldehyde 3-phosphate + L-tryptophan + H2O. The protein operates within amino-acid biosynthesis; L-tryptophan biosynthesis; L-tryptophan from chorismate: step 5/5. Functionally, the alpha subunit is responsible for the aldol cleavage of indoleglycerol phosphate to indole and glyceraldehyde 3-phosphate. In Synechocystis sp. (strain ATCC 27184 / PCC 6803 / Kazusa), this protein is Tryptophan synthase alpha chain.